The primary structure comprises 1068 residues: Focal adhesion kinase 1 (1068 aa).

Positions 1-26 are disordered; that stretch reads MAAAYLDPNLNHNPSTNAKSRLSTGM. Over residues 10–23 the composition is skewed to polar residues; it reads LNHNPSTNAKSRLS. Positions 35–355 constitute an FERM domain; sequence RVLRVFHYFE…GYCRLVSGAS (321 aa). A phosphotyrosine mark is found at tyrosine 403 and tyrosine 413. Residues 435–693 enclose the Protein kinase domain; that stretch reads IELGRCIGEG…ELKAQLSTIL (259 aa). ATP is bound by residues 441–447, lysine 467, and 513–515; these read IGEGQFG and ELC. The active-site Proton acceptor is aspartate 559. A phosphotyrosine; by autocatalysis mark is found at tyrosine 589 and tyrosine 590. Basic and acidic residues predominate over residues 699 to 710; the sequence is QQEERMRMESRR. Disordered stretches follow at residues 699–750 and 869–912; these read QQEE…QHMM and GNQH…DGYN. Phosphotyrosine occurs at positions 874 and 941.

It belongs to the protein kinase superfamily. Tyr protein kinase family. FAK subfamily. In terms of processing, phosphorylated on tyrosine residues; phosphorylated kinase is first detected during gastrulation, suggesting that tyrosine phosphorylation is developmentally regulated.

The protein resides in the cell junction. It is found in the focal adhesion. The protein localises to the cell membrane. It localises to the cytoplasm. Its subcellular location is the cytoskeleton. The protein resides in the cilium basal body. It carries out the reaction L-tyrosyl-[protein] + ATP = O-phospho-L-tyrosyl-[protein] + ADP + H(+). Its function is as follows. Non-receptor protein-tyrosine kinase implicated in signaling pathways involved in cell motility, proliferation and apoptosis. Activated by tyrosine-phosphorylation in response to either integrin clustering induced by cell adhesion or antibody cross-linking, or via G-protein coupled receptor (GPCR) occupancy by ligands such as bombesin or lysophosphatidic acid, or via LDL receptor occupancy. Microtubule-induced dephosphorylation at Tyr-397 is crucial for the induction of focal adhesion disassembly. This chain is Focal adhesion kinase 1 (ptk2), found in Xenopus laevis (African clawed frog).